Consider the following 1260-residue polypeptide: Paraclostridial mosquitocidal protein 1 (1260 aa).

Residue His-208 participates in Zn(2+) binding. Glu-209 acts as the Proton acceptor in catalysis. The Zn(2+) site is built by His-212 and Glu-248. A disulfide bridge links Cys-395 with Cys-406. The translocation domain (TD) stretch occupies residues 401-824; the sequence is NRVNICIDVN…NIQSIPDFDI (424 aa). Residues 825–1065 form an HCN region; it reads NALIDRLGIQ…SYFNSNILRD (241 aa). Residues 1066 to 1260 form an HCC region; that stretch reads FWGEPLEYNK…FVSEDEGWKE (195 aa).

The protein belongs to the peptidase M27 family. Requires Zn(2+) as cofactor.

The enzyme catalyses Limited hydrolysis of proteins of the neuroexocytosis apparatus, synaptobrevins, SNAP25 or syntaxin. No detected action on small molecule substrates.. Preincubation with the metalloprotease inhibitor 1,10-phenanthroline before injection into Anopheles or Aedes decreases toxicity. Its function is as follows. Neurotoxin active against Anopheles but not Aedes mosquitoes upon oral ingestion; expression of the ptox operon (ntnh-orfX1-orfX2-orfX3-pmp1) in B.thuringiensis kills Anopheles but not Aedes mosquito 3rd instar larvae. The ntnh-pmp1 construct is about half as toxic. PMP1 is toxic when injected directly into Anopheles or Aedes mosquito 3rd instar larvae, larvae no longer move, suggesting they are paralyzed. Adult mosquitoes (Anopheles or Aedes) and Drosophila lose the ability to fly in a dose-dependent manner by 24 hours after injection with 100 pg neurotoxin. Not toxic upon injection in mice. In terms of biological role, neurotoxin that cleaves A.gambiae syntaxin 1a, probably hydrolyzing the '240-Glu-|-His-241' bond. Does not cleave A.gambiae n-synaptobrevin or SNAP-25, nor human syntaxin 1A. Responsible for host epithelial cell transcytosis, host nerve cell targeting and translocation of PMP1 light chain (LC) into host cytosol. Composed of 3 subdomains; the translocation domain (TD), and N-terminus and C-terminus of the receptor-binding domain (RBD), called HCN and HCC. The protein is Paraclostridial mosquitocidal protein 1 of Paraclostridium bifermentans (Clostridium bifermentans).